The primary structure comprises 102 residues: Aspartyl/glutamyl-tRNA(Asn/Gln) amidotransferase subunit C (102 aa).

It belongs to the GatC family. Heterotrimer of A, B and C subunits.

The catalysed reaction is L-glutamyl-tRNA(Gln) + L-glutamine + ATP + H2O = L-glutaminyl-tRNA(Gln) + L-glutamate + ADP + phosphate + H(+). It catalyses the reaction L-aspartyl-tRNA(Asn) + L-glutamine + ATP + H2O = L-asparaginyl-tRNA(Asn) + L-glutamate + ADP + phosphate + 2 H(+). Functionally, allows the formation of correctly charged Asn-tRNA(Asn) or Gln-tRNA(Gln) through the transamidation of misacylated Asp-tRNA(Asn) or Glu-tRNA(Gln) in organisms which lack either or both of asparaginyl-tRNA or glutaminyl-tRNA synthetases. The reaction takes place in the presence of glutamine and ATP through an activated phospho-Asp-tRNA(Asn) or phospho-Glu-tRNA(Gln). The polypeptide is Aspartyl/glutamyl-tRNA(Asn/Gln) amidotransferase subunit C (Leuconostoc citreum (strain KM20)).